Reading from the N-terminus, the 189-residue chain is Dual-action ribosomal maturation protein DarP (189 aa).

The interval 1-22 (MWKNGAMRGCNKETGEFLGPSR) is disordered.

It belongs to the DarP family.

It is found in the cytoplasm. Its function is as follows. Member of a network of 50S ribosomal subunit biogenesis factors which assembles along the 30S-50S interface, preventing incorrect 23S rRNA structures from forming. Promotes peptidyl transferase center (PTC) maturation. The protein is Dual-action ribosomal maturation protein DarP of Xylella fastidiosa (strain Temecula1 / ATCC 700964).